Reading from the N-terminus, the 324-residue chain is NADH-ubiquinone oxidoreductase chain 1 (324 aa).

The next 9 helical transmembrane spans lie at 9 to 29 (IINP…LTLL), 43 to 63 (PNIV…KLFI), 75 to 95 (FLFL…WAPM), 106 to 126 (LGVL…LGSG), 146 to 166 (ISYE…TGGF), 177 to 197 (SIWL…STLA), 237 to 257 (ILLM…IPAF), 259 to 279 (ELTA…FLWV), and 299 to 319 (FLPL…AMAG).

It belongs to the complex I subunit 1 family.

Its subcellular location is the mitochondrion inner membrane. The enzyme catalyses a ubiquinone + NADH + 5 H(+)(in) = a ubiquinol + NAD(+) + 4 H(+)(out). In terms of biological role, core subunit of the mitochondrial membrane respiratory chain NADH dehydrogenase (Complex I) that is believed to belong to the minimal assembly required for catalysis. Complex I functions in the transfer of electrons from NADH to the respiratory chain. The immediate electron acceptor for the enzyme is believed to be ubiquinone. This is NADH-ubiquinone oxidoreductase chain 1 (MT-ND1) from Salmo salar (Atlantic salmon).